The following is a 387-amino-acid chain: Probable inactive shikimate kinase like 2, chloroplastic (387 aa).

Residues Met1–Ser71 constitute a chloroplast transit peptide. Residues Asn368–Thr387 are disordered.

It belongs to the shikimate kinase family.

Its subcellular location is the plastid. The protein localises to the chloroplast. This is Probable inactive shikimate kinase like 2, chloroplastic (SKL2) from Arabidopsis thaliana (Mouse-ear cress).